Here is a 307-residue protein sequence, read N- to C-terminus: Auxiliary protein GraX (307 aa).

Homodimer. Interacts with GraR and GraS.

In terms of biological role, plays a role in resistance against cationic antimicrobial peptides (CAMPs). Facilitates the activation of GraS to transduce the signal to GraR. The protein is Auxiliary protein GraX (graX) of Staphylococcus aureus (strain NCTC 8325 / PS 47).